We begin with the raw amino-acid sequence, 395 residues long: MDNHSSVPWASAASVTCLSLDAKCHSSSSSCSSKSTASSISASPETQTMRHIAHTQRCLSRLTSLVALLLIVLPMMFSPAHSCGPGRGLGRHRARNLYPLVLKQTIPNLSEYTNSASGPLEGVIRRDSPKFKDLVPNYNRDILFRDEEGTGADRLMSKRCKEKLNVLAYSVMNEWPGIRLLVTESWDEDYHHGQESLHYEGRAVTIATSDRDQSKYGMLARLAVEAGFDWVSYVSRRHIYCSVKSDSSISSHVHGCFTPESTALLESGVRKPLGELSIGDRVLSMTANGQGVYSEVILFMDRNLEQMQNFVQLHTDGGAVLTVTPAHLVSVWQPESQKLTFVFADRIEESTFFLLRDGQSGGGGEKQVQQNGIHWYANALYKVKDYVLPQSWRHD.

The N-terminal stretch at 1–26 is a signal peptide; it reads MDNHSSVPWASAASVTCLSLDAKCHS. The span at 26–43 shows a compositional bias: low complexity; that stretch reads SSSSSCSSKSTASSISAS. Residues 26–46 form a disordered region; sequence SSSSSCSSKSTASSISASPET. A propeptide spanning residues 27-82 is cleaved from the precursor; that stretch reads SSSSCSSKSTASSISASPETQTMRHIAHTQRCLSRLTSLVALLLIVLPMMFSPAHS. C83 carries the N-palmitoyl cysteine lipid modification. Ca(2+) contacts are provided by E147, E148, D153, T183, E184, D187, and D189. Residue G255 is the site of Cholesterol glycine ester attachment.

This sequence belongs to the hedgehog family. In terms of assembly, interacts with shf. In terms of processing, the C-terminal part of the hedgehog protein precursor displays an autoproteolysis activity that results in the cleavage of the full-length protein into two parts (N-product and C-product). In addition, the C-terminal part displays a cholesterol transferase activity that results by the covalent attachment of a cholesterol moiety to the C-terminal of the newly generated N-product. The N-product is the active species in both local and long-range signaling, whereas the C-product has no signaling activity. Post-translationally, cholesterylation is required for N-product targeting to lipid rafts and multimerization. N-palmitoylation by Rasp of the hedgehog N-product, within the secretory pathway, is required for the embryonic and larval patterning activities of the hedgehog signal.

The protein resides in the nucleus. It localises to the cytoplasm. Its subcellular location is the cell membrane. It carries out the reaction glycyl-L-cysteinyl-[protein] + cholesterol + H(+) = [protein]-C-terminal glycyl cholesterol ester + N-terminal L-cysteinyl-[protein]. Its function is as follows. The C-terminal part of the hedgehog protein precursor displays an autoproteolysis activity that results in the cleavage of the full-length protein into two parts (N-product and C-product). In addition, the C-terminal part displays a cholesterol transferase activity that results by the covalent attachment of a cholesterol moiety to the C-terminal of the newly generated N-product. Once cleaved, the C-product has no signaling activity and diffuses from the cell. The dually lipidated hedgehog protein N-product is a morphogen which is essential for a variety of patterning events during development. Establishes the anterior-posterior axis of the embryonic segments and patterns the larval imaginal disks. Binds to the patched (ptc) receptor, which functions in association with smoothened (smo), to activate the transcription of target genes wingless (wg), decapentaplegic (dpp) and ptc. In the absence of hh, ptc represses the constitutive signaling activity of smo through fused (fu). Essential component of a signaling pathway which regulates the Duox-dependent gut immune response to bacterial uracil; required to activate Cad99C-dependent endosome formation, norpA-dependent Ca2+ mobilization and p38 MAPK, which are essential steps in the Duox-dependent production of reactive oxygen species (ROS) in response to intestinal bacterial infection. During photoreceptor differentiation, it up-regulates transcription of Ubr3, which in turn promotes the hh-signaling pathway by mediating the ubiquitination and degradation of cos. This is Protein hedgehog from Drosophila simulans (Fruit fly).